Consider the following 626-residue polypeptide: Polypeptide N-acetylgalactosaminyltransferase 5 (626 aa).

Residues 1–11 (MIIFKKKAILK) are Cytoplasmic-facing. The chain crosses the membrane as a helical; Signal-anchor for type II membrane protein span at residues 12 to 31 (VLLLVPVFWICSLIFFAATS). N-linked (GlcNAc...) asparagine glycosylation occurs at Asn32. The Lumenal segment spans residues 32-626 (NDSSQIGSNN…AIEHGAKPPS (595 aa)). 5 disulfides stabilise this stretch: Cys165–Cys399, Cys390–Cys466, Cys502–Cys521, Cys544–Cys557, and Cys583–Cys598. A catalytic subdomain A region spans residues 174–284 (LPRTSVIICF…EGWMEPLLDR (111 aa)). Substrate-binding residues include Asp215 and Arg245. Mn(2+) is bound at residue Asp268. Ser269 is a binding site for substrate. His270 serves as a coordination point for Mn(2+). A glycan (N-linked (GlcNAc...) asparagine) is linked at Asn338. A catalytic subdomain B region spans residues 345 to 407 (PVRSPTMAGG…PCSHVGHVFR (63 aa)). A substrate-binding site is contributed by Trp376. His404 serves as a coordination point for Mn(2+). Positions 407 and 412 each coordinate substrate. One can recognise a Ricin B-type lectin domain in the interval 488-610 (AKGEVRNSAV…DDPYQHWKFK (123 aa)).

It belongs to the glycosyltransferase 2 family. GalNAc-T subfamily. Mn(2+) serves as cofactor.

It localises to the golgi apparatus membrane. The enzyme catalyses L-seryl-[protein] + UDP-N-acetyl-alpha-D-galactosamine = a 3-O-[N-acetyl-alpha-D-galactosaminyl]-L-seryl-[protein] + UDP + H(+). The catalysed reaction is L-threonyl-[protein] + UDP-N-acetyl-alpha-D-galactosamine = a 3-O-[N-acetyl-alpha-D-galactosaminyl]-L-threonyl-[protein] + UDP + H(+). It participates in protein modification; protein glycosylation. Functionally, catalyzes the initial reaction in O-linked oligosaccharide biosynthesis, the transfer of an N-acetyl-D-galactosamine residue to a serine or threonine residue on the protein receptor. This chain is Polypeptide N-acetylgalactosaminyltransferase 5 (gly-5), found in Caenorhabditis elegans.